The following is a 151-amino-acid chain: Large ribosomal subunit protein uL22 (151 aa).

Belongs to the universal ribosomal protein uL22 family. Part of the 50S ribosomal subunit.

This protein binds specifically to 23S rRNA. It makes multiple contacts with different domains of the 23S rRNA in the assembled 50S subunit and ribosome. In terms of biological role, the globular domain of the protein is located near the polypeptide exit tunnel on the outside of the subunit, while an extended beta-hairpin is found that lines the wall of the exit tunnel in the center of the 70S ribosome. The sequence is that of Large ribosomal subunit protein uL22 from Thermoplasma acidophilum (strain ATCC 25905 / DSM 1728 / JCM 9062 / NBRC 15155 / AMRC-C165).